A 194-amino-acid polypeptide reads, in one-letter code: uncharacterized protein (194 aa).

Positions 34–192 constitute an SIS domain; it reads VMQCLLGGNK…CELVDQTLFP (159 aa).

This sequence belongs to the SIS family. DiaA subfamily.

This is an uncharacterized protein from Haemophilus influenzae (strain ATCC 51907 / DSM 11121 / KW20 / Rd).